The primary structure comprises 339 residues: Protein-glutamate methylesterase/protein-glutamine glutaminase (339 aa).

A Response regulatory domain is found at 2–119 (RIGVVNDMPM…EGNASSQSAR (118 aa)). The residue at position 53 (Asp-53) is a 4-aspartylphosphate. The 190-residue stretch at 149–338 (PTPRRLIAIG…SRIIEACERS (190 aa)) folds into the CheB-type methylesterase domain. Active-site residues include Ser-160, His-187, and Asp-280.

This sequence belongs to the CheB family. Post-translationally, phosphorylated by CheA. Phosphorylation of the N-terminal regulatory domain activates the methylesterase activity.

It localises to the cytoplasm. It carries out the reaction [protein]-L-glutamate 5-O-methyl ester + H2O = L-glutamyl-[protein] + methanol + H(+). It catalyses the reaction L-glutaminyl-[protein] + H2O = L-glutamyl-[protein] + NH4(+). Its function is as follows. Involved in chemotaxis. Part of a chemotaxis signal transduction system that modulates chemotaxis in response to various stimuli. Catalyzes the demethylation of specific methylglutamate residues introduced into the chemoreceptors (methyl-accepting chemotaxis proteins or MCP) by CheR. Also mediates the irreversible deamidation of specific glutamine residues to glutamic acid. This chain is Protein-glutamate methylesterase/protein-glutamine glutaminase, found in Mesorhizobium japonicum (strain LMG 29417 / CECT 9101 / MAFF 303099) (Mesorhizobium loti (strain MAFF 303099)).